The primary structure comprises 103 residues: MYAVFQSGGKQHRVSEGQVVRLEKLEIATGEKFEFDSVLMVVNGEDVKIGAPVVAGAKVVAEVVAQGRGDKVKIVKFRRRKHSRKQQGHRQWFTEVKITGIQA.

This sequence belongs to the bacterial ribosomal protein bL21 family. As to quaternary structure, part of the 50S ribosomal subunit. Contacts protein L20.

This protein binds to 23S rRNA in the presence of protein L20. In Actinobacillus pleuropneumoniae serotype 7 (strain AP76), this protein is Large ribosomal subunit protein bL21.